The sequence spans 250 residues: Ribonuclease PH (250 aa).

Residues Arg86 and 124 to 126 (GTR) contribute to the phosphate site.

It belongs to the RNase PH family. Homohexameric ring arranged as a trimer of dimers.

It carries out the reaction tRNA(n+1) + phosphate = tRNA(n) + a ribonucleoside 5'-diphosphate. In terms of biological role, phosphorolytic 3'-5' exoribonuclease that plays an important role in tRNA 3'-end maturation. Removes nucleotide residues following the 3'-CCA terminus of tRNAs; can also add nucleotides to the ends of RNA molecules by using nucleoside diphosphates as substrates, but this may not be physiologically important. Probably plays a role in initiation of 16S rRNA degradation (leading to ribosome degradation) during starvation. The protein is Ribonuclease PH of Shouchella clausii (strain KSM-K16) (Alkalihalobacillus clausii).